Reading from the N-terminus, the 368-residue chain is Aminomethyltransferase (368 aa).

It belongs to the GcvT family. As to quaternary structure, the glycine cleavage system is composed of four proteins: P, T, L and H.

The catalysed reaction is N(6)-[(R)-S(8)-aminomethyldihydrolipoyl]-L-lysyl-[protein] + (6S)-5,6,7,8-tetrahydrofolate = N(6)-[(R)-dihydrolipoyl]-L-lysyl-[protein] + (6R)-5,10-methylene-5,6,7,8-tetrahydrofolate + NH4(+). In terms of biological role, the glycine cleavage system catalyzes the degradation of glycine. The sequence is that of Aminomethyltransferase from Thermoanaerobacter sp. (strain X514).